A 124-amino-acid polypeptide reads, in one-letter code: MPTINQLVRRPRKPSVSANKAPALQHNPQKRAVCVKVYTTTPKKPNSALRKVARVRIAGYGSEVIAYIPGEGHNLQEHSVVLIRGGRVKDLPGVRYHIVRGALDTKGVQGRKKARSKYGVKRGS.

Residues 1-24 (MPTINQLVRRPRKPSVSANKAPAL) form a disordered region. At D90 the chain carries 3-methylthioaspartic acid.

The protein belongs to the universal ribosomal protein uS12 family. As to quaternary structure, part of the 30S ribosomal subunit. Contacts proteins S8 and S17. May interact with IF1 in the 30S initiation complex.

Functionally, with S4 and S5 plays an important role in translational accuracy. Its function is as follows. Interacts with and stabilizes bases of the 16S rRNA that are involved in tRNA selection in the A site and with the mRNA backbone. Located at the interface of the 30S and 50S subunits, it traverses the body of the 30S subunit contacting proteins on the other side and probably holding the rRNA structure together. The combined cluster of proteins S8, S12 and S17 appears to hold together the shoulder and platform of the 30S subunit. This Anaplasma phagocytophilum (strain HZ) protein is Small ribosomal subunit protein uS12.